The chain runs to 232 residues: Ribosomal RNA small subunit methyltransferase G (232 aa).

Residues 1 to 24 are disordered; the sequence is MVDTALHPIPGRRTPPHPRSTLPL. S-adenosyl-L-methionine contacts are provided by residues G91, L96, 142–143, and R160; that span reads AE.

Belongs to the methyltransferase superfamily. RNA methyltransferase RsmG family.

It is found in the cytoplasm. In terms of biological role, specifically methylates the N7 position of guanine in position 518 of 16S rRNA. This is Ribosomal RNA small subunit methyltransferase G from Corynebacterium efficiens (strain DSM 44549 / YS-314 / AJ 12310 / JCM 11189 / NBRC 100395).